The chain runs to 435 residues: Cytidine monophosphate-N-acetylneuraminic acid hydroxylase (435 aa).

Belongs to the CMP-Neu5Ac hydroxylase family. [2Fe-2S] cluster serves as cofactor.

Its subcellular location is the cytoplasm. It catalyses the reaction CMP-N-acetyl-beta-neuraminate + 2 Fe(II)-[cytochrome b5] + O2 + 2 H(+) = CMP-N-glycoloyl-beta-neuraminate + 2 Fe(III)-[cytochrome b5] + H2O. Its pathway is amino-sugar metabolism; N-acetylneuraminate metabolism. Sialic acids are components of carbohydrate chains of glycoconjugates and are involved in cell-cell recognition and cell-pathogen interactions. Catalyzes the conversion of CMP-N-acetylneuraminic acid (CMP-Neu5Ac) into its hydroxylated derivative CMP-N-glycolylneuraminic acid (CMP-Neu5Gc), a sialic acid abundantly expressed at the surface of many cells. The polypeptide is Cytidine monophosphate-N-acetylneuraminic acid hydroxylase (Sus scrofa (Pig)).